Reading from the N-terminus, the 299-residue chain is Oxygen-dependent coproporphyrinogen-III oxidase (299 aa).

Serine 92 contacts substrate. Residues histidine 96 and histidine 106 each coordinate Mn(2+). The active-site Proton donor is histidine 106. 108 to 110 (NVR) is a binding site for substrate. Mn(2+) is bound by residues histidine 145 and histidine 175. The interval 240–275 (YVEFNLVWDRGTLFGLQTGGRTESILMSMPPLVRWE) is important for dimerization. 258–260 (GGR) is a binding site for substrate.

Belongs to the aerobic coproporphyrinogen-III oxidase family. In terms of assembly, homodimer. It depends on Mn(2+) as a cofactor.

The protein localises to the cytoplasm. It catalyses the reaction coproporphyrinogen III + O2 + 2 H(+) = protoporphyrinogen IX + 2 CO2 + 2 H2O. It functions in the pathway porphyrin-containing compound metabolism; protoporphyrin-IX biosynthesis; protoporphyrinogen-IX from coproporphyrinogen-III (O2 route): step 1/1. Involved in the heme biosynthesis. Catalyzes the aerobic oxidative decarboxylation of propionate groups of rings A and B of coproporphyrinogen-III to yield the vinyl groups in protoporphyrinogen-IX. The sequence is that of Oxygen-dependent coproporphyrinogen-III oxidase from Escherichia coli (strain K12 / MC4100 / BW2952).